Here is a 163-residue protein sequence, read N- to C-terminus: Endoribonuclease YbeY (163 aa).

His126, His130, and His136 together coordinate Zn(2+).

This sequence belongs to the endoribonuclease YbeY family. It depends on Zn(2+) as a cofactor.

Its subcellular location is the cytoplasm. Single strand-specific metallo-endoribonuclease involved in late-stage 70S ribosome quality control and in maturation of the 3' terminus of the 16S rRNA. This Chelativorans sp. (strain BNC1) protein is Endoribonuclease YbeY.